The chain runs to 316 residues: Probable cell division protein WhiA (316 aa).

Positions 275–309 form a DNA-binding region, H-T-H motif; sequence TLKELGEMVESGKISKSGINHRLRKLDQIAEQLRN.

The protein belongs to the WhiA family.

In terms of biological role, involved in cell division and chromosome segregation. In Bacillus pumilus (strain SAFR-032), this protein is Probable cell division protein WhiA.